A 138-amino-acid chain; its full sequence is Outer membrane protein assembly factor BamE (138 aa).

An N-terminal signal peptide occupies residues 1–42 (MSHLTMIKTLNLRPFHSASALRKIVITSILGVAVTMSGCSLL).

The protein belongs to the BamE family. Part of the Bam complex.

Its subcellular location is the cell outer membrane. Functionally, part of the outer membrane protein assembly complex, which is involved in assembly and insertion of beta-barrel proteins into the outer membrane. This Psychrobacter arcticus (strain DSM 17307 / VKM B-2377 / 273-4) protein is Outer membrane protein assembly factor BamE.